A 555-amino-acid polypeptide reads, in one-letter code: Glutamine--tRNA ligase (555 aa).

The 'HIGH' region signature appears at 34–44 (PEPNGYLHIGH). ATP-binding positions include 35 to 37 (EPN) and 41 to 47 (HIGHAKS). Positions 67 and 212 each coordinate L-glutamine. Residues T231, 261-262 (RL), and 269-271 (MSK) contribute to the ATP site. Positions 268 to 272 (IMSKR) match the 'KMSKS' region motif.

Belongs to the class-I aminoacyl-tRNA synthetase family. As to quaternary structure, monomer.

Its subcellular location is the cytoplasm. The catalysed reaction is tRNA(Gln) + L-glutamine + ATP = L-glutaminyl-tRNA(Gln) + AMP + diphosphate. In Yersinia pseudotuberculosis serotype O:3 (strain YPIII), this protein is Glutamine--tRNA ligase.